Reading from the N-terminus, the 226-residue chain is Uridylate kinase (226 aa).

Position 6 to 10 (6 to 10 (KISGK)) interacts with ATP. G43 lines the UMP pocket. 2 residues coordinate ATP: G44 and R48. UMP contacts are provided by residues D65 and 113–119 (FQPGQST). 4 residues coordinate ATP: T139, N140, Y145, and D148.

This sequence belongs to the UMP kinase family. As to quaternary structure, homohexamer.

It is found in the cytoplasm. It carries out the reaction UMP + ATP = UDP + ADP. It participates in pyrimidine metabolism; CTP biosynthesis via de novo pathway; UDP from UMP (UMPK route): step 1/1. With respect to regulation, inhibited by UTP. Its function is as follows. Catalyzes the reversible phosphorylation of UMP to UDP. The polypeptide is Uridylate kinase (Sulfurisphaera tokodaii (strain DSM 16993 / JCM 10545 / NBRC 100140 / 7) (Sulfolobus tokodaii)).